The primary structure comprises 388 residues: Formate-dependent phosphoribosylglycinamide formyltransferase (388 aa).

Residues 11–12 and E71 each bind N(1)-(5-phospho-beta-D-ribosyl)glycinamide; that span reads EL. Residues R103, K144, 149–154, 184–187, and E192 each bind ATP; these read SSGKGQ and EEFI. The ATP-grasp domain maps to 108-300; sequence DLAAKELGLK…EFELHLRAVL (193 aa). The Mg(2+) site is built by E257 and E270. N(1)-(5-phospho-beta-D-ribosyl)glycinamide-binding positions include D277, K349, and 356 to 357; that span reads RR.

This sequence belongs to the PurK/PurT family. In terms of assembly, homodimer.

The enzyme catalyses N(1)-(5-phospho-beta-D-ribosyl)glycinamide + formate + ATP = N(2)-formyl-N(1)-(5-phospho-beta-D-ribosyl)glycinamide + ADP + phosphate + H(+). The protein operates within purine metabolism; IMP biosynthesis via de novo pathway; N(2)-formyl-N(1)-(5-phospho-D-ribosyl)glycinamide from N(1)-(5-phospho-D-ribosyl)glycinamide (formate route): step 1/1. Involved in the de novo purine biosynthesis. Catalyzes the transfer of formate to 5-phospho-ribosyl-glycinamide (GAR), producing 5-phospho-ribosyl-N-formylglycinamide (FGAR). Formate is provided by PurU via hydrolysis of 10-formyl-tetrahydrofolate. The polypeptide is Formate-dependent phosphoribosylglycinamide formyltransferase (Bacteroides thetaiotaomicron (strain ATCC 29148 / DSM 2079 / JCM 5827 / CCUG 10774 / NCTC 10582 / VPI-5482 / E50)).